The following is a 156-amino-acid chain: Small ribosomal subunit protein uS7cz/uS7cy (156 aa).

Belongs to the universal ribosomal protein uS7 family. As to quaternary structure, part of the 30S ribosomal subunit.

The protein resides in the plastid. Its subcellular location is the chloroplast. One of the primary rRNA binding proteins, it binds directly to 16S rRNA where it nucleates assembly of the head domain of the 30S subunit. The polypeptide is Small ribosomal subunit protein uS7cz/uS7cy (rps7-A) (Triticum aestivum (Wheat)).